The primary structure comprises 140 residues: Profilin-1 (140 aa).

Alanine 2 carries the N-acetylalanine modification. Serine 28 carries the post-translational modification Phosphoserine. Lysine 54 is covalently cross-linked (Glycyl lysine isopeptide (Lys-Gly) (interchain with G-Cter in SUMO2); alternate). Lysine 54 is covalently cross-linked (Glycyl lysine isopeptide (Lys-Gly) (interchain with G-Cter in ubiquitin); alternate). Serine 57 is modified (phosphoserine). Residue lysine 108 is modified to N6-acetyllysine. Tyrosine 129 bears the Phosphotyrosine mark. A Phosphoserine; by ROCK1 modification is found at serine 138.

The protein belongs to the profilin family. In terms of assembly, found in a complex with XPO6, Ran, ACTB and PFN1. Interacts with ACTB. Interacts with VASP. Interacts with HTT. Interacts with SH3BGRL. Occurs in many kinds of cells as a complex with monomeric actin in a 1:1 ratio. Interacts with ACTMAP. Phosphorylation at Ser-138 reduces its affinity for G-actin and blocks its interaction with HTT, reducing its ability to inhibit androgen receptor (AR) and HTT aggregation.

It is found in the cytoplasm. The protein localises to the cytoskeleton. Its function is as follows. Binds to actin and affects the structure of the cytoskeleton. At high concentrations, profilin prevents the polymerization of actin, whereas it enhances it at low concentrations. By binding to PIP2, it inhibits the formation of IP3 and DG. Inhibits androgen receptor (AR) and HTT aggregation and binding of G-actin is essential for its inhibition of AR. The sequence is that of Profilin-1 (Pfn1) from Mus musculus (Mouse).